The following is a 215-amino-acid chain: Cytochrome b6 (215 aa).

Residues 32–52 traverse the membrane as a helical segment; it reads IFYCFGGITFTCFLVQVATGF. Cysteine 35 lines the heme c pocket. Heme b contacts are provided by histidine 86 and histidine 100. Helical transmembrane passes span 90-110, 116-136, and 186-206; these read ASMMVLMMILHIFRVYLTGGF, LTWVTGVLMAVCTVSFGVTGY, and LHTFVLPLFTAVFMLMHFLMI. The heme b site is built by histidine 187 and histidine 202.

It belongs to the cytochrome b family. PetB subfamily. As to quaternary structure, the 4 large subunits of the cytochrome b6-f complex are cytochrome b6, subunit IV (17 kDa polypeptide, PetD), cytochrome f and the Rieske protein, while the 4 small subunits are PetG, PetL, PetM and PetN. The complex functions as a dimer. Heme b is required as a cofactor. It depends on heme c as a cofactor.

The protein localises to the plastid. Its subcellular location is the chloroplast thylakoid membrane. In terms of biological role, component of the cytochrome b6-f complex, which mediates electron transfer between photosystem II (PSII) and photosystem I (PSI), cyclic electron flow around PSI, and state transitions. The chain is Cytochrome b6 from Auxenochlorella protothecoides (Green microalga).